Reading from the N-terminus, the 304-residue chain is Beta-lactamase-like protein str6 (304 aa).

It belongs to the beta-lactamase family.

It functions in the pathway mycotoxin biosynthesis. Functionally, beta-lactamase-like protein; part of the gene cluster that mediates the biosynthesis of strobilurin A, an antifungal polyketide that contains a key beta-methoxyacrylate toxophore that targets the complex III of the mitochondrial electron transport chain. Strobilurin biosynthesis begins with construction of benzoyl CoA by step-wise elimination of ammonia from phenylalanine by the phenylalanine ammonia-lyase str11, oxygenation by str8 and retro-Claisen reaction to form benzoic acid, which is activated to its CoA thiolester benzoyl CoA by the dedicated CoA ligase str10. Benzoyl CoA forms the starter unit for the highly reducing polyketide synthase stpks1 that produces the polyketide prestrobilutin A. The FAD-dependent oxygenase str9 then catalyzes the key oxidative rearrangement responsible for the creation of the beta-methoxyacrylate toxophore. Str9 performs epoxidation of the 2,3 olefin of prestrobilutin A, followed by Meinwald rearrangement to furnish the aldehyde intermediate. Rapid enolization of the aldehyde intermediate would give the beta-methoxyacrylate skeleton and methylations catalyzed by str2 and str3 complete the synthesis and lead to the production of strobilurin A. The short-chain dehydrogenase stl2 and the dehydrogenase str4 play a role in the shunt pathway leading to the production of bolineol. The cluster encodes no obvious halogenase gene that could be involved in production of strobilurin B, nor any obvious dimethylallyl-transferase that could be involved in the production of strobilurin G. It is possible that unknown proteins encoded in, or near, the cluster (such as str1 or stl1) may form new classes of halogenases or dimethylally-transferases, or that the responsible genes are located elsewhere on the genome. Similarly, proteins encoded by str5/str6 hydrolases appear to have no chemical role in the biosynthesis of strobilurin A. Finally, no obvious self-resistance gene is found within the cluster. This Strobilurus tenacellus protein is Beta-lactamase-like protein str6.